The primary structure comprises 174 residues: CASP-like protein 4D2 (174 aa).

At 1–14 the chain is on the cytoplasmic side; the sequence is MAPPPPSPPAVSLK. The helical transmembrane segment at 15–35 threads the bilayer; sequence VLLLLLRVLTGVFLVIALIIL. The Extracellular portion of the chain corresponds to 36–60; that stretch reads STNSVTIVSQGSALKFHFKDVYAYR. Residues 61-81 form a helical membrane-spanning segment; the sequence is YMLSAAVIGLVYAVIQLFFTI. At 82-97 the chain is on the cytoplasmic side; it reads SEFATGVKNPFNYQLD. Residues 98–118 form a helical membrane-spanning segment; the sequence is FYGDKLISYLVATGSAAGFGV. The Extracellular segment spans residues 119–150; that stretch reads TKDLKDTFLALVALDSTDPVDKFFSKGYASAS. Residues 151–171 traverse the membrane as a helical segment; that stretch reads LLLFAFICLAVLSVFSSFAMA. Topologically, residues 172–174 are cytoplasmic; it reads KRN.

Belongs to the Casparian strip membrane proteins (CASP) family. In terms of assembly, homodimer and heterodimers.

The protein resides in the cell membrane. The sequence is that of CASP-like protein 4D2 from Arabidopsis thaliana (Mouse-ear cress).